We begin with the raw amino-acid sequence, 466 residues long: tRNA modification GTPase MnmE (466 aa).

Positions 24, 85, and 128 each coordinate (6S)-5-formyl-5,6,7,8-tetrahydrofolate. The TrmE-type G domain occupies 224-384 (GLNIVLAGQP…LRTELLHLVG (161 aa)). K(+) is bound at residue asparagine 234. Residues 234–239 (NVGKSS), 253–259 (TPIAGTT), and 278–281 (DTAG) each bind GTP. Serine 238 serves as a coordination point for Mg(2+). The K(+) site is built by threonine 253, isoleucine 255, and threonine 258. Threonine 259 contributes to the Mg(2+) binding site. Lysine 466 provides a ligand contact to (6S)-5-formyl-5,6,7,8-tetrahydrofolate.

This sequence belongs to the TRAFAC class TrmE-Era-EngA-EngB-Septin-like GTPase superfamily. TrmE GTPase family. As to quaternary structure, homodimer. Heterotetramer of two MnmE and two MnmG subunits. The cofactor is K(+).

The protein resides in the cytoplasm. Functionally, exhibits a very high intrinsic GTPase hydrolysis rate. Involved in the addition of a carboxymethylaminomethyl (cmnm) group at the wobble position (U34) of certain tRNAs, forming tRNA-cmnm(5)s(2)U34. In Herminiimonas arsenicoxydans, this protein is tRNA modification GTPase MnmE.